A 94-amino-acid chain; its full sequence is uncharacterized protein (94 aa).

In terms of biological role, could be a silencing control element for the regulation of the restriction system. This is an uncharacterized protein from Herpetosiphon aurantiacus (Herpetosiphon giganteus).